The chain runs to 273 residues: Ciliary microtubule inner protein 2B (273 aa).

Disordered stretches follow at residues 59–85 and 123–164; these read TLLPPIQSPRSPVISKGRLPPRRGHER and RHGE…HASP. Over residues 123-159 the composition is skewed to basic and acidic residues; it reads RHGEQESHQLPDGAKGEREVEEDQLREAEEPPLKQEL.

Belongs to the CIMIP2 family. Microtubule inner protein component of sperm flagellar doublet microtubules. In terms of tissue distribution, expressed in airway epithelial cells.

Its subcellular location is the cytoplasm. The protein localises to the cytoskeleton. It localises to the cilium axoneme. The protein resides in the flagellum axoneme. Functionally, microtubule inner protein (MIP) part of the dynein-decorated doublet microtubules (DMTs) in cilia axoneme, which is required for motile cilia beating. The chain is Ciliary microtubule inner protein 2B (Cimip2b) from Mus musculus (Mouse).